The following is a 235-amino-acid chain: Thiamine-phosphate synthase (235 aa).

Residues 50 to 54 and Asn91 contribute to the 4-amino-2-methyl-5-(diphosphooxymethyl)pyrimidine site; that span reads QLRDK. Mg(2+)-binding residues include Asp92 and Asp111. Position 130 (Ser130) interacts with 4-amino-2-methyl-5-(diphosphooxymethyl)pyrimidine. 160–162 provides a ligand contact to 2-[(2R,5Z)-2-carboxy-4-methylthiazol-5(2H)-ylidene]ethyl phosphate; that stretch reads TPT. Lys163 is a binding site for 4-amino-2-methyl-5-(diphosphooxymethyl)pyrimidine. Gly191 is a 2-[(2R,5Z)-2-carboxy-4-methylthiazol-5(2H)-ylidene]ethyl phosphate binding site.

Belongs to the thiamine-phosphate synthase family. The cofactor is Mg(2+).

The catalysed reaction is 2-[(2R,5Z)-2-carboxy-4-methylthiazol-5(2H)-ylidene]ethyl phosphate + 4-amino-2-methyl-5-(diphosphooxymethyl)pyrimidine + 2 H(+) = thiamine phosphate + CO2 + diphosphate. The enzyme catalyses 2-(2-carboxy-4-methylthiazol-5-yl)ethyl phosphate + 4-amino-2-methyl-5-(diphosphooxymethyl)pyrimidine + 2 H(+) = thiamine phosphate + CO2 + diphosphate. It catalyses the reaction 4-methyl-5-(2-phosphooxyethyl)-thiazole + 4-amino-2-methyl-5-(diphosphooxymethyl)pyrimidine + H(+) = thiamine phosphate + diphosphate. Its pathway is cofactor biosynthesis; thiamine diphosphate biosynthesis; thiamine phosphate from 4-amino-2-methyl-5-diphosphomethylpyrimidine and 4-methyl-5-(2-phosphoethyl)-thiazole: step 1/1. In terms of biological role, condenses 4-methyl-5-(beta-hydroxyethyl)thiazole monophosphate (THZ-P) and 2-methyl-4-amino-5-hydroxymethyl pyrimidine pyrophosphate (HMP-PP) to form thiamine monophosphate (TMP). This Mycobacterium leprae (strain TN) protein is Thiamine-phosphate synthase.